We begin with the raw amino-acid sequence, 292 residues long: tRNA pseudouridine synthase B (292 aa).

The active-site Nucleophile is the D40.

This sequence belongs to the pseudouridine synthase TruB family. Type 1 subfamily.

The catalysed reaction is uridine(55) in tRNA = pseudouridine(55) in tRNA. Functionally, responsible for synthesis of pseudouridine from uracil-55 in the psi GC loop of transfer RNAs. This Mycoplasma capricolum subsp. capricolum (strain California kid / ATCC 27343 / NCTC 10154) protein is tRNA pseudouridine synthase B.